A 142-amino-acid polypeptide reads, in one-letter code: COA8 family protein CBG23705, mitochondrial (142 aa).

The protein belongs to the COA8 family.

It localises to the mitochondrion inner membrane. In terms of biological role, may be required for cytochrome c complex (COX) assembly and function, COX being the terminal component of the mitochondrial respiratory chain. The chain is COA8 family protein CBG23705, mitochondrial from Caenorhabditis briggsae.